The primary structure comprises 618 residues: uncharacterized protein (618 aa).

A DNA-binding region (zn(2)-C6 fungal-type) is located at residues serine 18 to tyrosine 47. Phosphoserine is present on serine 598.

Its subcellular location is the nucleus. This is an uncharacterized protein from Schizosaccharomyces pombe (strain 972 / ATCC 24843) (Fission yeast).